We begin with the raw amino-acid sequence, 309 residues long: Prepilin leader peptidase/N-methyltransferase (309 aa).

Residues 35 to 55 traverse the membrane as a helical segment; the sequence is MQLAFAIVLGLVVGSFINVVV. The Zn(2+) site is built by Cys96, Cys99, Cys121, and Cys124. 6 helical membrane-spanning segments follow: residues 147-167, 183-203, 207-227, 230-250, 253-273, and 288-308; these read LALFGPSGAALAAFGLCAALL, LTLPLLWAGLCVNLWGTFASL, VIGAIAGYLFLWCILWLFKLL, IEGIGYGDLKLLAALGAWLGW, LPQVVLIAAVAGAAVGLVATW, and FLAAGGAATLFFGTPFYLLLG.

This sequence belongs to the peptidase A24 family. Requires Zn(2+) as cofactor.

The protein resides in the cell inner membrane. The enzyme catalyses Typically cleaves a -Gly-|-Phe- bond to release an N-terminal, basic peptide of 5-8 residues from type IV prepilin, and then N-methylates the new N-terminal amino group, the methyl donor being S-adenosyl-L-methionine.. In terms of biological role, plays an essential role in type IV pili and type II pseudopili formation by proteolytically removing the leader sequence from substrate proteins and subsequently monomethylating the alpha-amino group of the newly exposed N-terminal phenylalanine. The sequence is that of Prepilin leader peptidase/N-methyltransferase (gspO) from Burkholderia pseudomallei (strain K96243).